A 125-amino-acid polypeptide reads, in one-letter code: MSFLRPTLALLAVTALVTTSAQMNGYTKKEVTPEDMELLQKAQSNVSAYNRDVTSRICYLKVDSLETQVVSGESYKFHVSGCGVNSDKELGGCANQNCESSKYDIVIYSQSWTNTLEVTSITPAN.

The first 21 residues, 1 to 21, serve as a signal peptide directing secretion; it reads MSFLRPTLALLAVTALVTTSA. Residue N45 is glycosylated (N-linked (GlcNAc...) asparagine). The short motif at 68 to 72 is the Secondary area of contact element; the sequence is QVVSG.

It belongs to the cystatin family.

It is found in the secreted. Functionally, secreted effector that interacts with and inhibits host apoplastic pathogenesis-related papain-like cysteine proteases. Inhibition of host proteases by a pathogen extracellular protease inhibitor forms a specific type of defense-counterdefense mechanism between plants and microbial pathogens. The polypeptide is Cystatin-like cysteine protease inhibitor EPIC2A (Phytophthora infestans (strain T30-4) (Potato late blight agent)).